Consider the following 591-residue polypeptide: Aspartate--tRNA ligase (591 aa).

Residue E176 participates in L-aspartate binding. The aspartate stretch occupies residues 200–203; sequence QILK. R222 is a binding site for L-aspartate. ATP contacts are provided by residues 222–224 and Q231; that span reads RDE. L-aspartate is bound at residue H450. E484 is a binding site for ATP. R491 is a binding site for L-aspartate. An ATP-binding site is contributed by 536 to 539; sequence GLDR.

This sequence belongs to the class-II aminoacyl-tRNA synthetase family. Type 1 subfamily. Homodimer.

The protein resides in the cytoplasm. The enzyme catalyses tRNA(Asp) + L-aspartate + ATP = L-aspartyl-tRNA(Asp) + AMP + diphosphate. In terms of biological role, catalyzes the attachment of L-aspartate to tRNA(Asp) in a two-step reaction: L-aspartate is first activated by ATP to form Asp-AMP and then transferred to the acceptor end of tRNA(Asp). This chain is Aspartate--tRNA ligase, found in Listeria monocytogenes serovar 1/2a (strain ATCC BAA-679 / EGD-e).